A 242-amino-acid chain; its full sequence is Ribosomal RNA small subunit methyltransferase G (242 aa).

S-adenosyl-L-methionine-binding positions include G78, F83, 129–130, and R148; that span reads AE.

The protein belongs to the methyltransferase superfamily. RNA methyltransferase RsmG family.

Its subcellular location is the cytoplasm. Specifically methylates the N7 position of a guanine in 16S rRNA. The chain is Ribosomal RNA small subunit methyltransferase G from Lachnoclostridium phytofermentans (strain ATCC 700394 / DSM 18823 / ISDg) (Clostridium phytofermentans).